A 292-amino-acid chain; its full sequence is 4-hydroxy-tetrahydrodipicolinate synthase (292 aa).

A pyruvate-binding site is contributed by T46. Y134 acts as the Proton donor/acceptor in catalysis. Residue K162 is the Schiff-base intermediate with substrate of the active site. I204 serves as a coordination point for pyruvate.

This sequence belongs to the DapA family. In terms of assembly, homotetramer; dimer of dimers.

It localises to the cytoplasm. It catalyses the reaction L-aspartate 4-semialdehyde + pyruvate = (2S,4S)-4-hydroxy-2,3,4,5-tetrahydrodipicolinate + H2O + H(+). It functions in the pathway amino-acid biosynthesis; L-lysine biosynthesis via DAP pathway; (S)-tetrahydrodipicolinate from L-aspartate: step 3/4. Functionally, catalyzes the condensation of (S)-aspartate-beta-semialdehyde [(S)-ASA] and pyruvate to 4-hydroxy-tetrahydrodipicolinate (HTPA). The protein is 4-hydroxy-tetrahydrodipicolinate synthase of Moorella thermoacetica (strain ATCC 39073 / JCM 9320).